The sequence spans 187 residues: Abscisic acid receptor PYL9 (187 aa).

The tract at residues 27–178 (HLCRENQCTS…NLKSLADVSE (152 aa)) is START-like. Intrachain disulfides connect Cys-29–Cys-159 and Cys-34–Cys-159. Residues Lys-63, 91–96 (ATTSTE), 118–124 (RLKNYSS), and Glu-143 contribute to the abscisate site. The Gate loop motif lies at 87 to 91 (SGLPA). Positions 117–119 (HRL) match the Latch loop motif.

Belongs to the PYR/PYL/RCAR abscisic acid intracellular receptor family. In terms of assembly, homodimer. Monomer. Binds ABA on one subunit only. Binds to CARs protein in an ABA-independent manner, both at the plasma membrane and in the nucleus. Binds specifically (+)-ABA but not (-)-ABA. Interacts with HAB1, ABI1 and ABI2, and possibly with other PP2Cs. Interacts with TOPP1. Interacts with DDA1. In terms of tissue distribution, expressed in root tips, vascular tissues, stomata, flowers, pollen tubes and developing seeds.

It is found in the cytoplasm. Its subcellular location is the nucleus. The protein resides in the cell membrane. In terms of biological role, receptor for abscisic acid (ABA) required for ABA-mediated responses such as stomatal closure and germination inhibition. Inhibits the activity of group-A protein phosphatases type 2C (PP2Cs) in an ABA-independent manner but more efficiently when activated by ABA. Confers enhanced sensitivity to ABA. Can be activated only by (+)-ABA but not by (-)-ABA. The polypeptide is Abscisic acid receptor PYL9 (PYL9) (Arabidopsis thaliana (Mouse-ear cress)).